The primary structure comprises 345 residues: Hydroxymethylglutaryl-CoA synthase (345 aa).

Asp-28 is a binding site for (3S)-3-hydroxy-3-methylglutaryl-CoA. The active-site Proton donor/acceptor is Glu-80. (3S)-3-hydroxy-3-methylglutaryl-CoA is bound by residues Cys-112 and Thr-153. Cys-112 (acyl-thioester intermediate) is an active-site residue. Residue Arg-199 participates in CoA binding. Thr-201 and His-234 together coordinate (3S)-3-hydroxy-3-methylglutaryl-CoA. His-234 acts as the Proton donor/acceptor in catalysis. Lys-239 contributes to the CoA binding site. 3 residues coordinate (3S)-3-hydroxy-3-methylglutaryl-CoA: Arg-243, Asn-266, and Ser-296.

Belongs to the thiolase-like superfamily. Archaeal HMG-CoA synthase family. As to quaternary structure, interacts with acetoacetyl-CoA thiolase that catalyzes the precedent step in the pathway and with a DUF35 protein. The acetoacetyl-CoA thiolase/HMG-CoA synthase complex channels the intermediate via a fused CoA-binding site, which allows for efficient coupling of the endergonic thiolase reaction with the exergonic HMGCS reaction.

The enzyme catalyses acetoacetyl-CoA + acetyl-CoA + H2O = (3S)-3-hydroxy-3-methylglutaryl-CoA + CoA + H(+). It participates in metabolic intermediate biosynthesis; (R)-mevalonate biosynthesis; (R)-mevalonate from acetyl-CoA: step 2/3. Functionally, catalyzes the condensation of acetyl-CoA with acetoacetyl-CoA to form 3-hydroxy-3-methylglutaryl-CoA (HMG-CoA). Functions in the mevalonate (MVA) pathway leading to isopentenyl diphosphate (IPP), a key precursor for the biosynthesis of isoprenoid compounds that are building blocks of archaeal membrane lipids. This chain is Hydroxymethylglutaryl-CoA synthase, found in Methanobrevibacter smithii (strain ATCC 35061 / DSM 861 / OCM 144 / PS).